A 1202-amino-acid chain; its full sequence is Metabotropic glycine receptor (1202 aa).

A signal peptide spans 1 to 24; the sequence is MGAMAYSLLLCLLLAHLGLGEVGA. The tract at residues 25 to 62 is disordered; it reads SLDPSERPDSSRERTSRGKQHGQQLPRASAPDPSIPWS. Over 25-417 the chain is Extracellular; the sequence is SLDPSERPDS…CFVQEDKYLR (393 aa). The span at 28–40 shows a compositional bias: basic and acidic residues; it reads PSERPDSSRERTS. The segment at 85–281 is cache-like region; that stretch reads YLYTGDFHQL…CENGSYKPGW (197 aa). N-linked (GlcNAc...) asparagine glycosylation is found at Asn98 and Asn143. Cys99 and Cys272 are oxidised to a cystine. Positions 172 and 173 each coordinate glycine. Asn215 is a glycosylation site (N-linked (GlcNAc...) asparagine). The disordered stretch occupies residues 234–253; the sequence is LHRRGSNQGPRGLGHSWRRR. Residue Glu271 participates in glycine binding. N-linked (GlcNAc...) asparagine glycosylation occurs at Asn274. Asp307 lines the glycine pocket. The N-linked (GlcNAc...) asparagine glycan is linked to Asn333. The chain crosses the membrane as a helical span at residues 418–439; it reads LAIISFQALCMLLDFVSMLVVY. At 440 to 451 the chain is on the cytoplasmic side; the sequence is HFRKAKSIRASG. A helical transmembrane segment spans residues 452-474; that stretch reads LILLETILFGSLLLYFPVVILYF. The Extracellular segment spans residues 475 to 478; the sequence is EPST. The helical transmembrane segment at 479–501 threads the bilayer; sequence FRCILLRWVRLLGFATVYGTVTL. Cys481 and Cys573 are joined by a disulfide. Topologically, residues 502–525 are cytoplasmic; it reads KLHRVLKVFLSRTAQRIPYMTGGR. Residues 526 to 547 form a helical membrane-spanning segment; the sequence is VMRMLAVIVLVVFWFLVGWTSS. At 548-576 the chain is on the extracellular side; the sequence is MCQNLERDILLVGQGQTSDNLTFNMCLID. A helical transmembrane segment spans residues 577–597; that stretch reads RWDYMTAVAEFLFLLWGIYLC. The Cytoplasmic portion of the chain corresponds to 598–611; that stretch reads YAVRTVPSAFHEPR. Residues 612–633 form a helical membrane-spanning segment; that stretch reads YMAVAVHNELIITAIFHTIRFV. The Extracellular portion of the chain corresponds to 634 to 642; that stretch reads LASRLQPDW. The helical transmembrane segment at 643–664 threads the bilayer; it reads MLMLYFAHTHLTVTVTIGLLLI. At 665-1202 the chain is on the cytoplasmic side; that stretch reads PKFSHSSNNP…SASKIPGPRK (538 aa). Ser694, Ser705, and Ser708 each carry phosphoserine. 2 disordered regions span residues 757 to 899 and 914 to 995; these read RITE…TSML and LGLA…QIKD. Composition is skewed to basic and acidic residues over residues 769 to 781 and 819 to 828; these read CSKE…DHSA and STYDHVRDQT. Residue Lys774 forms a Glycyl lysine isopeptide (Lys-Gly) (interchain with G-Cter in ubiquitin) linkage. Over residues 845–856 the composition is skewed to low complexity; the sequence is ENSTLESLSSKK. Residue Ser865 is modified to Phosphoserine. Residues 925 to 943 show a composition bias toward basic and acidic residues; that stretch reads MEDRAKSQKPQPKDRETNR. 2 stretches are compositionally biased toward polar residues: residues 944–958 and 975–994; these read KYSN…PNSN and QRVN…TQIK. The residue at position 946 (Ser946) is a Phosphoserine. The VCPWE motif 1 motif lies at 1002-1006; that stretch reads VCPWE. Ser1061 is modified (phosphoserine). The VCPWE motif 2 motif lies at 1067-1071; it reads VCPWE. The residue at position 1076 (Ser1076) is a Phosphoserine. 2 stretches are compositionally biased toward polar residues: residues 1132 to 1144 and 1151 to 1162; these read QMGD…SSSV and CISSNNSPQPLT. Positions 1132-1162 are disordered; sequence QMGDQEKQTSSSVDIIPGSCISSNNSPQPLT. Positions 1167–1171 match the VCPWE motif 3 motif; that stretch reads VCPWE.

Belongs to the G-protein coupled receptor 3 family. In terms of assembly, homodimer. Associates with the RGS7-GNB5 complex, promoting its localization to the cell membrane and regulating its GTPase activator activity. Interacts (via VCPWE motifs) with GNAO1. Interacts with GPC4. Interacts with EGFLAM.

It is found in the cell membrane. It localises to the postsynaptic cell membrane. Its subcellular location is the presynaptic cell membrane. The protein localises to the nucleus. Metabotropic receptor for glycine that controls synapse formation and function in the brain. Acts as an atypical G-protein coupled receptor that recruits and regulates the RGS7-GNB5 complex instead of activating G proteins. In absence of glycine ligand, promotes the GTPase activator activity of RGS7, increasing the GTPase activity of G protein alpha subunits, thereby driving them into their inactive GDP-bound form. Glycine-binding changes the conformation of the intracellular surface, inhibiting the GTPase activator activity of the RGS7-GNB5 complex, promoting G protein alpha subunits into their active GTP-bound form and regulating cAMP levels. Also able to bind taurine, a compound closely related to glycine, but with a two-fold lower affinity. Glycine receptor-dependent regulation of cAMP controls key ion channels, kinases and neurotrophic factors involved in neuronal excitability and synaptic transmission. Plays a pivotal role in regulating mood and cognition via its ability to regulate neuronal excitability in L2/L3 pyramidal neurons of the prefrontal cortex. Also involved in spatial learning by regulating hippocampal CA1 neuronal excitability. Acts as a synaptic organizer in the hippocampus, required for proper mossy fiber-CA3 neurocircuitry establishment, structure and function: induces presynaptic differentiation in contacting axons via its interaction with GPC4. In addition to glycine, may also act as a receptor for osteocalcin (BGLAP) hormone: osteocalcin-binding initiates a signaling response that prevents neuronal apoptosis in the hippocampus and regulates the synthesis of neurotransmitters. The polypeptide is Metabotropic glycine receptor (Rattus norvegicus (Rat)).